A 1700-amino-acid polypeptide reads, in one-letter code: Probable serine/threonine-protein kinase ifkC (1700 aa).

The segment at 1-25 (MPPKPKQKAKQPSQQPPPPPPPAAA) is disordered. Positions 14–23 (QQPPPPPPPA) are enriched in pro residues. The region spanning 74–197 (MELEALQAIF…EIAKDFLNEN (124 aa)) is the RWD domain. Over residues 454–463 (GLKKSPSTFE) the composition is skewed to polar residues. Residues 454–488 (GLKKSPSTFEYSGEGGGGGVGGGSSQKTINPHQQS) form a disordered region. The segment covering 466–477 (GEGGGGGVGGGS) has biased composition (gly residues). A compositionally biased stretch (polar residues) spans 479–488 (QKTINPHQQS). The Protein kinase domain maps to 494–1027 (FEEIQLLGRG…AQQLLQSELM (534 aa)). Residues 500-508 (LGRGGFGQV) and lysine 523 each bind ATP. 2 disordered regions span residues 568-639 (LTND…ENND) and 689-760 (GNNT…SSSK). The segment covering 572–639 (NSDDDDDDDD…SEFESEENND (68 aa)) has biased composition (acidic residues). Residues 697–735 (SSNQHLQQQQQQNQSQQQKKQPQQNQSQQQKKLKNSNSK) are compositionally biased toward low complexity. Over residues 736–752 (SKSKSKSKSKSKSKSNS) the composition is skewed to basic residues. Residue aspartate 822 is the Proton acceptor of the active site. Composition is skewed to low complexity over residues 850–875 (TSTL…SSNS), 1135–1158 (NNSS…NTNS), 1230–1240 (SSNGNSNNNNS), and 1509–1531 (NNSN…SYNN). Disordered stretches follow at residues 850–901 (TSTL…EVEG), 1134–1160 (FNNS…NSVV), 1216–1253 (KHHH…SNTT), and 1507–1531 (NLNN…SYNN).

Belongs to the protein kinase superfamily. Ser/Thr protein kinase family. GCN2 subfamily.

The enzyme catalyses L-seryl-[protein] + ATP = O-phospho-L-seryl-[protein] + ADP + H(+). The catalysed reaction is L-threonyl-[protein] + ATP = O-phospho-L-threonyl-[protein] + ADP + H(+). This Dictyostelium discoideum (Social amoeba) protein is Probable serine/threonine-protein kinase ifkC (ifkC).